The sequence spans 547 residues: Probable ABC transporter periplasmic-binding protein SapA (547 aa).

The first 21 residues, 1-21 (MRQVLSSLLVIAGLVSGQAIA), serve as a signal peptide directing secretion.

It belongs to the bacterial solute-binding protein 5 family.

It localises to the periplasm. Not part of a putrescine export system. Very similar to a S.typhimurium protein implicated in antimicrobial peptide resistance, but the SapBCDF operon in E.coli is implicated in putrescine export. In Escherichia coli (strain K12), this protein is Probable ABC transporter periplasmic-binding protein SapA (sapA).